A 240-amino-acid chain; its full sequence is Ribosomal RNA small subunit methyltransferase I (240 aa).

It belongs to the methyltransferase superfamily. RsmI family.

It is found in the cytoplasm. It catalyses the reaction cytidine(1402) in 16S rRNA + S-adenosyl-L-methionine = 2'-O-methylcytidine(1402) in 16S rRNA + S-adenosyl-L-homocysteine + H(+). Functionally, catalyzes the 2'-O-methylation of the ribose of cytidine 1402 (C1402) in 16S rRNA. This is Ribosomal RNA small subunit methyltransferase I from Leptospira biflexa serovar Patoc (strain Patoc 1 / ATCC 23582 / Paris).